We begin with the raw amino-acid sequence, 404 residues long: Glutamyl-tRNA reductase (404 aa).

Residues 47–50, serine 94, 99–101, and glutamine 105 each bind substrate; these read TCNR and EQE. The active-site Nucleophile is cysteine 48. 174–179 is a binding site for NADP(+); the sequence is GAGEMG.

Homotetramer.

The enzyme catalyses (S)-4-amino-5-oxopentanoate + tRNA(Glu) + NADP(+) = L-glutamyl-tRNA(Glu) + NADPH + H(+). The protein operates within porphyrin-containing compound metabolism; protoporphyrin-IX biosynthesis; 5-aminolevulinate from L-glutamyl-tRNA(Glu): step 1/2. Its activity is regulated as follows. Inhibited by heavy metal compounds, Zn(2+), and heme. Also competitively inhibited by glutamycin. Catalyzes the NADPH-dependent reduction of glutamyl-tRNA(Glu) to glutamate 1-semialdehyde (GSA). In the absence of NADPH, exhibits substrate esterase activity, leading to the release of glutamate from tRNA. The polypeptide is Glutamyl-tRNA reductase (hemA) (Methanopyrus kandleri (strain AV19 / DSM 6324 / JCM 9639 / NBRC 100938)).